A 345-amino-acid chain; its full sequence is Uroporphyrinogen decarboxylase (345 aa).

Substrate-binding positions include 24–28 (RQAGR), Asp74, Tyr150, Ser205, and His318.

This sequence belongs to the uroporphyrinogen decarboxylase family. As to quaternary structure, homodimer.

It localises to the cytoplasm. It carries out the reaction uroporphyrinogen III + 4 H(+) = coproporphyrinogen III + 4 CO2. Its pathway is porphyrin-containing compound metabolism; protoporphyrin-IX biosynthesis; coproporphyrinogen-III from 5-aminolevulinate: step 4/4. Catalyzes the decarboxylation of four acetate groups of uroporphyrinogen-III to yield coproporphyrinogen-III. This chain is Uroporphyrinogen decarboxylase, found in Dichelobacter nodosus (strain VCS1703A).